The chain runs to 62 residues: Temporin-La (62 aa).

Residues Met-1–Cys-22 form the signal peptide. Residues Glu-23–Arg-47 constitute a propeptide that is removed on maturation. At Leu-60 the chain carries Leucine amide.

It belongs to the frog skin active peptide (FSAP) family. Temporin subfamily. As to expression, expressed by the skin glands.

It is found in the secreted. The protein localises to the target cell membrane. Antimicrobial peptide with amphipathic alpha-helical structure that acts against both Gram-positive and Gram-negative bacteria and the fungus Candida albicans. Is active against S.aureus ATCC 25923 (MIC=2.5 ug/ml), S.suis 2 CVCC 606 (MIC=15.6 ug/ml), Salmonella ATCC 20020 (MIC=15.6 ug/ml), P.aeruginosa ATCC 227853 (MIC=60 ug/ml), and C.albicans ATCC10231 (MIC=31.25 ug/ml). Is not active against B.subtilis ADB403, E.coli ATCC 25922, and K.pneumoniae ATCC 700603. Also shows a strong antitumor activity, but no hemolytic activity. This chain is Temporin-La, found in Aquarana catesbeiana (American bullfrog).